Reading from the N-terminus, the 734-residue chain is Elongation factor 2 (734 aa).

The 242-residue stretch at 18-259 (EQIRNIGITA…MVVKYVPNPR (242 aa)) folds into the tr-type G domain. Residues 27 to 34 (AHVDHGKT), 93 to 97 (DTPGH), and 147 to 150 (NKID) contribute to the GTP site. Histidine 600 is subject to Diphthamide.

The protein belongs to the TRAFAC class translation factor GTPase superfamily. Classic translation factor GTPase family. EF-G/EF-2 subfamily.

It localises to the cytoplasm. Its function is as follows. Catalyzes the GTP-dependent ribosomal translocation step during translation elongation. During this step, the ribosome changes from the pre-translocational (PRE) to the post-translocational (POST) state as the newly formed A-site-bound peptidyl-tRNA and P-site-bound deacylated tRNA move to the P and E sites, respectively. Catalyzes the coordinated movement of the two tRNA molecules, the mRNA and conformational changes in the ribosome. The protein is Elongation factor 2 (fusA) of Desulfurococcus mucosus (Desulfurococcus mobilis).